Consider the following 257-residue polypeptide: MAADGVDERSPLLSASHSGSVTPTAPPYLQDSSPRAELPPPYTAIVSPDASGIPVINCRVCQSLINLDGKLHQHVVKCTVCNEATPIKNPPAGKKYVRCPCNCLLICKDTSRRIGCPRPNCRRIINLGPVMLVSEEQPAQPALPVQPEGTRVVCGHCGNTFLWMELRFNTLAKCPHCKKISSVGSALPRRRCCAYITIGMMCIFIGIGLTVGTQDFARRFHATYVSWAIAYLLGLVCLIRACYWGAIRVSYPEHSFA.

Basic and acidic residues predominate over residues Met1–Ser10. The interval Met1–Pro34 is disordered. Positions Leu13–Pro23 are enriched in polar residues. Residue Thr22 is modified to Phosphothreonine. Ser33 is modified (phosphoserine). Cys107 is an active-site residue. Residues Cys107–Arg113 carry the CX5R motif motif. Helical transmembrane passes span Cys192–Gly212 and Trp227–Ile247.

The protein resides in the late endosome membrane. It localises to the lysosome membrane. It is found in the cytoplasmic vesicle. The protein localises to the phagosome membrane. Its subcellular location is the cell membrane. It carries out the reaction a 1,2-diacyl-sn-glycero-3-phospho-(1D-myo-inositol-4,5-bisphosphate) + H2O = a 1,2-diacyl-sn-glycero-3-phospho-(1D-myo-inositol-5-phosphate) + phosphate. Catalyzes the hydrolysis of phosphatidylinositol-4,5-bisphosphate (PtdIns-4,5-P2) to phosphatidylinositol-4-phosphate (PtdIns-4-P). Does not hydrolyze phosphatidylinositol 3,4,5-trisphosphate, phosphatidylinositol 3,4-bisphosphate, inositol 3,5-bisphosphate, inositol 3,4-bisphosphate, phosphatidylinositol 5-monophosphate, phosphatidylinositol 4-monophosphate and phosphatidylinositol 3-monophosphate. Negatively regulates the phagocytosis of large particles by reducing phagosomal phosphatidylinositol 4,5-bisphosphate accumulation during cup formation. The chain is Type 2 phosphatidylinositol 4,5-bisphosphate 4-phosphatase from Bos taurus (Bovine).